Consider the following 426-residue polypeptide: Enolase 1 (426 aa).

(2R)-2-phosphoglycerate is bound at residue Q163. E205 acts as the Proton donor in catalysis. Mg(2+)-binding residues include D242, E283, and D310. (2R)-2-phosphoglycerate is bound by residues K335, R364, S365, and K386. K335 (proton acceptor) is an active-site residue.

It belongs to the enolase family. Requires Mg(2+) as cofactor.

The protein resides in the cytoplasm. It localises to the secreted. The protein localises to the cell surface. The catalysed reaction is (2R)-2-phosphoglycerate = phosphoenolpyruvate + H2O. It functions in the pathway carbohydrate degradation; glycolysis; pyruvate from D-glyceraldehyde 3-phosphate: step 4/5. Its function is as follows. Catalyzes the reversible conversion of 2-phosphoglycerate (2-PG) into phosphoenolpyruvate (PEP). It is essential for the degradation of carbohydrates via glycolysis. The chain is Enolase 1 from Streptomyces coelicolor (strain ATCC BAA-471 / A3(2) / M145).